A 402-amino-acid polypeptide reads, in one-letter code: MVTLRRLAVLLGAIPAALAAPTTQKREVVPNKYIVTLKEGASNFDSHISWVSDIHKRSLSRRSTAGIEKEFHIDTFNAYVGEFDETTIEEIKNNPDVLEVEEDQIWHLFDEQDEGEFSTAALVTQNGAWGLGTISHRQPGSTSYIYDDSAGSGTYAYVVDTGILESHNEFSGRAITGYNAVGGSNADTNGHGTHVAGTIGGRTYGVAKNTNLIAVKVFRGSSSSTSIILDGFNWAVNDIINRGRQNKAAISMSLGGGYSSAFNNAVNTAYSRGVLSVVAAGNDNQNAANYSPASAANAITVGSIASNWARSSFSNYGSVLDIFAPGTSILSAWIGGNSATNTISGTSMATPHVTGVVLYLQALEGLTTSGAAARLNALATTGRVSNPGSGSPNRILYNGNGA.

A signal peptide spans 1 to 20 (MVTLRRLAVLLGAIPAALAA). A propeptide spanning residues 21–120 (PTTQKREVVP…EQDEGEFSTA (100 aa)) is cleaved from the precursor. The region spanning 32–108 (KYIVTLKEGA…EVEEDQIWHL (77 aa)) is the Inhibitor I9 domain. Residues 128–402 (AWGLGTISHR…NRILYNGNGA (275 aa)) form the Peptidase S8 domain. Catalysis depends on charge relay system residues Asp-160, His-191, and Ser-347. Positions 382 to 392 (GRVSNPGSGSP) are enriched in polar residues. Residues 382-402 (GRVSNPGSGSPNRILYNGNGA) are disordered.

This sequence belongs to the peptidase S8 family.

This chain is Alkaline proteinase (ALP), found in Hapsidospora chrysogena (Acremonium chrysogenum).